The following is a 349-amino-acid chain: Hydroxymethylglutaryl-CoA synthase (349 aa).

The (3S)-3-hydroxy-3-methylglutaryl-CoA site is built by aspartate 29 and alanine 30. Glutamate 81 (proton donor/acceptor) is an active-site residue. Positions 113, 154, 202, and 235 each coordinate (3S)-3-hydroxy-3-methylglutaryl-CoA. Cysteine 113 (acyl-thioester intermediate) is an active-site residue. The active-site Proton donor/acceptor is histidine 235. Residue arginine 240 coordinates CoA. Residues arginine 244, asparagine 267, and serine 297 each contribute to the (3S)-3-hydroxy-3-methylglutaryl-CoA site.

Belongs to the thiolase-like superfamily. Archaeal HMG-CoA synthase family. In terms of assembly, interacts with acetoacetyl-CoA thiolase that catalyzes the precedent step in the pathway and with a DUF35 protein. The acetoacetyl-CoA thiolase/HMG-CoA synthase complex channels the intermediate via a fused CoA-binding site, which allows for efficient coupling of the endergonic thiolase reaction with the exergonic HMGCS reaction.

The catalysed reaction is acetoacetyl-CoA + acetyl-CoA + H2O = (3S)-3-hydroxy-3-methylglutaryl-CoA + CoA + H(+). It functions in the pathway metabolic intermediate biosynthesis; (R)-mevalonate biosynthesis; (R)-mevalonate from acetyl-CoA: step 2/3. In terms of biological role, catalyzes the condensation of acetyl-CoA with acetoacetyl-CoA to form 3-hydroxy-3-methylglutaryl-CoA (HMG-CoA). Functions in the mevalonate (MVA) pathway leading to isopentenyl diphosphate (IPP), a key precursor for the biosynthesis of isoprenoid compounds that are building blocks of archaeal membrane lipids. In Caldivirga maquilingensis (strain ATCC 700844 / DSM 13496 / JCM 10307 / IC-167), this protein is Hydroxymethylglutaryl-CoA synthase.